The sequence spans 466 residues: tRNA modification GTPase MnmE (466 aa).

Positions 24, 85, and 128 each coordinate (6S)-5-formyl-5,6,7,8-tetrahydrofolate. The TrmE-type G domain maps to 224 to 384; the sequence is GLNIVLAGQP…LRTELLHLVG (161 aa). Asn234 contacts K(+). Residues 234–239, 253–259, and 278–281 contribute to the GTP site; these read NVGKSS, TPIAGTT, and DTAG. Mg(2+) is bound at residue Ser238. Thr253, Ile255, and Thr258 together coordinate K(+). Mg(2+) is bound at residue Thr259. Residue Lys466 participates in (6S)-5-formyl-5,6,7,8-tetrahydrofolate binding.

This sequence belongs to the TRAFAC class TrmE-Era-EngA-EngB-Septin-like GTPase superfamily. TrmE GTPase family. Homodimer. Heterotetramer of two MnmE and two MnmG subunits. K(+) serves as cofactor.

The protein resides in the cytoplasm. In terms of biological role, exhibits a very high intrinsic GTPase hydrolysis rate. Involved in the addition of a carboxymethylaminomethyl (cmnm) group at the wobble position (U34) of certain tRNAs, forming tRNA-cmnm(5)s(2)U34. In Herminiimonas arsenicoxydans, this protein is tRNA modification GTPase MnmE.